A 145-amino-acid polypeptide reads, in one-letter code: MKKIYMLVALLISSLVLFAGCVQNETSEVPTLTVAYLPTDHHASLFVACDNPDLFKDKYGICLKAVKDKEEYELYKGNKKIANVKVVKVTEGGASIMNLMTQGQVDVALLGYPPVIFYIDKGTKAKVIMNLHTEVLQLLLERIFQ.

A helical transmembrane segment spans residues 4 to 24 (IYMLVALLISSLVLFAGCVQN).

The protein localises to the membrane. This is an uncharacterized protein from Methanocaldococcus jannaschii (strain ATCC 43067 / DSM 2661 / JAL-1 / JCM 10045 / NBRC 100440) (Methanococcus jannaschii).